A 349-amino-acid chain; its full sequence is Microbial Terpene synthase-like protein 1 (349 aa).

Residues D98, D102, N243, and S247 each coordinate Mg(2+). The DDXXD motif motif lies at D98–D102.

It belongs to the terpene synthase family. It depends on Mg(2+) as a cofactor.

The protein operates within secondary metabolite biosynthesis; terpenoid biosynthesis. Its function is as follows. Sesquiterpene synthase converting farnesyl diphosphate to six sesquiterpenes, with beta-elemene, delta-cadinene and an unidentified oxygenated sesquiterpene as the major products. Has no diterpene synthase activity. The chain is Microbial Terpene synthase-like protein 1 from Selaginella moellendorffii (Spikemoss).